Consider the following 331-residue polypeptide: Inner membrane ABC transporter permease protein YjfF (331 aa).

Over 1-5 (MIKRN) the chain is Cytoplasmic. The chain crosses the membrane as a helical span at residues 6–26 (LPLMITIGVFVLGYLYCLTQF). Over 27–42 (PGFASTRVICNILTDN) the chain is Periplasmic. The helical transmembrane segment at 43–63 (AFLGIIAVGMTFVILSGGIDL) threads the bilayer. Topologically, residues 64–88 (SVGSVIAFTGVFLAKVIGDFGLSPL) are cytoplasmic. A helical transmembrane segment spans residues 89–109 (LAFPLVLVMGCAFGAFMGLLI). The Periplasmic portion of the chain corresponds to 110 to 113 (DALK). Residues 114–134 (IPAFIITLAGMFFLRGVSYLV) traverse the membrane as a helical segment. The Cytoplasmic portion of the chain corresponds to 135–159 (SEESIPINHPIYDTLSSLAWKIPGG). A helical transmembrane segment spans residues 160 to 180 (GRLSAMGLLMLAVVVIGIFLA). The Periplasmic portion of the chain corresponds to 181-222 (HRTRFGNQVYAIGGNATSANLMGISTRSTTIRIYMLSTGLAT). A helical transmembrane segment spans residues 223–243 (LAGIVFSIYTQAGYALAGVGV). The Cytoplasmic segment spans residues 244-250 (ELDAIAS). A helical membrane pass occupies residues 251–271 (VVIGGTLLSGGVGTVLGTLFG). The Periplasmic portion of the chain corresponds to 272 to 294 (VAIQGLIQTYINFDGTLSSWWTK). A helical transmembrane segment spans residues 295-315 (IAIGILLFIFIALQRGLTVLW). At 316-331 (ENRQSSPVTRVNIAQQ) the chain is on the cytoplasmic side.

It belongs to the binding-protein-dependent transport system permease family. AraH/RbsC subfamily. The complex is composed of two ATP-binding proteins (YtfR), two transmembrane proteins (YtfT and YjfF) and a solute-binding protein (YtfQ).

The protein resides in the cell inner membrane. Part of the ABC transporter complex YtfQRT-YjfF involved in galactofuranose transport. Probably responsible for the translocation of the substrate across the membrane. The chain is Inner membrane ABC transporter permease protein YjfF (yjfF) from Escherichia coli (strain K12).